The sequence spans 631 residues: MSDLEKKYSKLIEGIITHLGDRKSLSFSELSNLLPDDILEPEILDCICSVLEDRGIRLVNKISELDLVVSEDGNDEEEEVEIESDRNFMILDDGFQSDEEDIDIDVKLDDCDEEDISVKDDLGSGYIKGNVLKDSHSEDPIKLYLKEIGKEFLLTGNQEVELAKQMDSGESIIENILKNEGLVIENYYNLVNTIYSRMEREEFFKREKDKDKESSPDYYNKKKRIASFYKIPLKPIQDRLISYVDNKHRVYDLGGDIFEKNLKKERLALKELLRDIPLYQEELRIFSDDYIDSANKIKDLQRQQRIILSRLKIEKIRDLRVLGRDLTIAEKKIEIEKSLKLKEDAIKEQITEAQLAQKELERIEMYYEYPTDKIISMSEEIAKGKQMMQHAKDQLIKANLRLVVSIAKKYANRGLHFFDLVQEGNIGLIKAVEKFEYKRGFKFSTYATWWIRQAITRSISDQARTIRVPVHMIEQINRLNRETRYLIQVLGKDPTDEELSDRLGWELKKVKTVKSVSREPVSLETPIGEEEDSVLSDFIEDKAIKNPANHTSFVVLQDQIRAILGTLPEREQEVVKMRFGLEDGYSLTLEEVGLHFNVTRERIRQIESKALRRLKNPKKTQKLKDYLEDLN.

A sigma-70 factor domain-2 region spans residues Leu395–Thr465. The Interaction with polymerase core subunit RpoC signature appears at Asp419–Gln422. The interval Glu474–His550 is sigma-70 factor domain-3. A sigma-70 factor domain-4 region spans residues Ile563–Asn616. The H-T-H motif DNA-binding region spans Leu589–Ser608.

The protein belongs to the sigma-70 factor family. RpoD/SigA subfamily. Interacts transiently with the RNA polymerase catalytic core.

Its subcellular location is the cytoplasm. Sigma factors are initiation factors that promote the attachment of RNA polymerase to specific initiation sites and are then released. This sigma factor is the primary sigma factor during exponential growth. The protein is RNA polymerase sigma factor RpoD of Borreliella burgdorferi (strain ATCC 35210 / DSM 4680 / CIP 102532 / B31) (Borrelia burgdorferi).